The sequence spans 380 residues: Cytochrome b (380 aa).

Transmembrane regions (helical) follow at residues 33-53, 77-98, 113-133, and 178-198; these read FGSL…FLAM, WLIR…YLHV, WNIG…GYVL, and FFAF…LHLL. Residues histidine 83 and histidine 97 each contribute to the heme b site. The heme b site is built by histidine 182 and histidine 196. Histidine 201 is an a ubiquinone binding site. 4 helical membrane-spanning segments follow: residues 226 to 246, 288 to 308, 320 to 340, and 347 to 367; these read YKDI…ALFS, LGGV…PILH, FSQF…WIGG, and FIII…LLIP.

This sequence belongs to the cytochrome b family. As to quaternary structure, the cytochrome bc1 complex contains 3 respiratory subunits (MT-CYB, CYC1 and UQCRFS1), 2 core proteins (UQCRC1 and UQCRC2) and probably 6 low-molecular weight proteins. Requires heme b as cofactor.

The protein resides in the mitochondrion inner membrane. Component of the ubiquinol-cytochrome c reductase complex (complex III or cytochrome b-c1 complex) that is part of the mitochondrial respiratory chain. The b-c1 complex mediates electron transfer from ubiquinol to cytochrome c. Contributes to the generation of a proton gradient across the mitochondrial membrane that is then used for ATP synthesis. The protein is Cytochrome b (mt-cyb) of Arapaima gigas (Arapaima).